Consider the following 333-residue polypeptide: Fructose-1,6-bisphosphatase class 1 (333 aa).

Mg(2+)-binding residues include E90, D113, L115, and D116. Substrate is bound by residues 116–119 (DGSS), N209, Y242, and K272. E278 contacts Mg(2+).

The protein belongs to the FBPase class 1 family. Homotetramer. It depends on Mg(2+) as a cofactor.

It is found in the cytoplasm. It catalyses the reaction beta-D-fructose 1,6-bisphosphate + H2O = beta-D-fructose 6-phosphate + phosphate. The protein operates within carbohydrate biosynthesis; gluconeogenesis. The polypeptide is Fructose-1,6-bisphosphatase class 1 (Pasteurella multocida (strain Pm70)).